The following is a 258-amino-acid chain: Ribosomal RNA small subunit methyltransferase A (258 aa).

S-adenosyl-L-methionine contacts are provided by histidine 9, leucine 11, glycine 36, glutamate 57, aspartate 83, and asparagine 102.

Belongs to the class I-like SAM-binding methyltransferase superfamily. rRNA adenine N(6)-methyltransferase family. RsmA subfamily.

The protein localises to the cytoplasm. It carries out the reaction adenosine(1518)/adenosine(1519) in 16S rRNA + 4 S-adenosyl-L-methionine = N(6)-dimethyladenosine(1518)/N(6)-dimethyladenosine(1519) in 16S rRNA + 4 S-adenosyl-L-homocysteine + 4 H(+). Specifically dimethylates two adjacent adenosines (A1518 and A1519) in the loop of a conserved hairpin near the 3'-end of 16S rRNA in the 30S particle. May play a critical role in biogenesis of 30S subunits. The protein is Ribosomal RNA small subunit methyltransferase A of Caulobacter vibrioides (strain ATCC 19089 / CIP 103742 / CB 15) (Caulobacter crescentus).